Consider the following 131-residue polypeptide: Holo-[acyl-carrier-protein] synthase (131 aa).

Residues Asp8 and Glu59 each contribute to the Mg(2+) site.

This sequence belongs to the P-Pant transferase superfamily. AcpS family. Mg(2+) serves as cofactor.

It localises to the cytoplasm. It carries out the reaction apo-[ACP] + CoA = holo-[ACP] + adenosine 3',5'-bisphosphate + H(+). Its function is as follows. Transfers the 4'-phosphopantetheine moiety from coenzyme A to a Ser of acyl-carrier-protein. This is Holo-[acyl-carrier-protein] synthase from Rickettsia felis (strain ATCC VR-1525 / URRWXCal2) (Rickettsia azadi).